A 125-amino-acid polypeptide reads, in one-letter code: Glycoprotein hormones alpha chain (125 aa).

The N-terminal stretch at 1 to 30 is a signal peptide; sequence MVSAVTTMGCMKAAGVSLLLLYFLLNAADS. 5 disulfides stabilise this stretch: C41/C64, C44/C93, C61/C114, C65/C116, and C92/C119. N-linked (GlcNAc...) asparagine glycans are attached at residues N85 and N110.

This sequence belongs to the glycoprotein hormones subunit alpha family. Heterodimer. Glycoprotein hormones are heterodimers composed of a common alpha chain described here and a unique beta chain which confers their biological specificity to the different hormones.

Its subcellular location is the secreted. Its function is as follows. Shared alpha chain of heterodimeric glycoprotein hormones. These hormones bind specific receptors on target cells that in turn activate downstream signaling pathways. Involved in gametogenesis and steroidogenesis. The sequence is that of Glycoprotein hormones alpha chain (cga) from Fundulus heteroclitus (Killifish).